A 359-amino-acid polypeptide reads, in one-letter code: 3-dehydroquinate synthase (359 aa).

NAD(+) contacts are provided by residues 71–76 (DGEQYK), 105–109 (GVIGD), 129–130 (TT), Lys142, Lys151, and 169–172 (CLKT). Zn(2+) contacts are provided by Glu184, His247, and His264.

Belongs to the sugar phosphate cyclases superfamily. Dehydroquinate synthase family. The cofactor is Co(2+). Zn(2+) serves as cofactor. It depends on NAD(+) as a cofactor.

It localises to the cytoplasm. The enzyme catalyses 7-phospho-2-dehydro-3-deoxy-D-arabino-heptonate = 3-dehydroquinate + phosphate. The protein operates within metabolic intermediate biosynthesis; chorismate biosynthesis; chorismate from D-erythrose 4-phosphate and phosphoenolpyruvate: step 2/7. Catalyzes the conversion of 3-deoxy-D-arabino-heptulosonate 7-phosphate (DAHP) to dehydroquinate (DHQ). This chain is 3-dehydroquinate synthase, found in Shewanella amazonensis (strain ATCC BAA-1098 / SB2B).